A 381-amino-acid polypeptide reads, in one-letter code: Erythronate-4-phosphate dehydrogenase (381 aa).

The substrate site is built by Ser45 and Thr66. NAD(+) contacts are provided by residues Asp146, Thr174, 205-207 (ASR), and Asp231. Arg207 is a catalytic residue. The active site involves Glu236. His253 serves as the catalytic Proton donor. Residue Gly256 coordinates NAD(+). Position 257 (Tyr257) interacts with substrate.

The protein belongs to the D-isomer specific 2-hydroxyacid dehydrogenase family. PdxB subfamily. As to quaternary structure, homodimer.

It localises to the cytoplasm. It catalyses the reaction 4-phospho-D-erythronate + NAD(+) = (R)-3-hydroxy-2-oxo-4-phosphooxybutanoate + NADH + H(+). Its pathway is cofactor biosynthesis; pyridoxine 5'-phosphate biosynthesis; pyridoxine 5'-phosphate from D-erythrose 4-phosphate: step 2/5. Functionally, catalyzes the oxidation of erythronate-4-phosphate to 3-hydroxy-2-oxo-4-phosphonooxybutanoate. This chain is Erythronate-4-phosphate dehydrogenase, found in Stutzerimonas stutzeri (strain A1501) (Pseudomonas stutzeri).